Consider the following 195-residue polypeptide: Endoribonuclease YbeY (195 aa).

Positions 153, 157, and 163 each coordinate Zn(2+).

This sequence belongs to the endoribonuclease YbeY family. Zn(2+) serves as cofactor.

The protein resides in the cytoplasm. Its function is as follows. Single strand-specific metallo-endoribonuclease involved in late-stage 70S ribosome quality control and in maturation of the 3' terminus of the 16S rRNA. The polypeptide is Endoribonuclease YbeY (Prochlorococcus marinus (strain SARG / CCMP1375 / SS120)).